A 176-amino-acid polypeptide reads, in one-letter code: Lipoprotein signal peptidase (176 aa).

4 consecutive transmembrane segments (helical) span residues 10-30 (LFQF…AIVL), 48-68 (VPVL…AFSF), 78-98 (YFFT…LLRM), and 102-122 (MVVL…NLID). Active-site residues include aspartate 131 and aspartate 149. The helical transmembrane segment at 141–161 (HFPAFNIADSAITLGTILLLI) threads the bilayer.

It belongs to the peptidase A8 family.

The protein localises to the cell inner membrane. It carries out the reaction Release of signal peptides from bacterial membrane prolipoproteins. Hydrolyzes -Xaa-Yaa-Zaa-|-(S,diacylglyceryl)Cys-, in which Xaa is hydrophobic (preferably Leu), and Yaa (Ala or Ser) and Zaa (Gly or Ala) have small, neutral side chains.. Its pathway is protein modification; lipoprotein biosynthesis (signal peptide cleavage). Its function is as follows. This protein specifically catalyzes the removal of signal peptides from prolipoproteins. This is Lipoprotein signal peptidase from Acinetobacter baumannii (strain ATCC 17978 / DSM 105126 / CIP 53.77 / LMG 1025 / NCDC KC755 / 5377).